A 394-amino-acid polypeptide reads, in one-letter code: Argininosuccinate synthase (394 aa).

ATP-binding positions include 7-15 (AYSGGLDTS) and alanine 34. L-citrulline-binding residues include tyrosine 85 and serine 90. Residue glycine 115 coordinates ATP. 3 residues coordinate L-aspartate: threonine 117, asparagine 121, and aspartate 122. Asparagine 121 is an L-citrulline binding site. The L-citrulline site is built by arginine 125, serine 176, serine 185, glutamate 261, and tyrosine 273.

Belongs to the argininosuccinate synthase family. Type 1 subfamily. As to quaternary structure, homotetramer.

The protein resides in the cytoplasm. It catalyses the reaction L-citrulline + L-aspartate + ATP = 2-(N(omega)-L-arginino)succinate + AMP + diphosphate + H(+). It functions in the pathway amino-acid biosynthesis; L-arginine biosynthesis; L-arginine from L-ornithine and carbamoyl phosphate: step 2/3. This chain is Argininosuccinate synthase, found in Ehrlichia ruminantium (strain Gardel).